The sequence spans 343 residues: Phosphatidylglycerol--prolipoprotein diacylglyceryl transferase 1 (343 aa).

4 consecutive transmembrane segments (helical) span residues 19–39 (VPLR…VWLG), 54–74 (ADIA…YHVI), 93–113 (IWEG…GAWI), and 119–139 (GVPM…AQAI). R141 contacts a 1,2-diacyl-sn-glycero-3-phospho-(1'-sn-glycerol). The next 3 helical transmembrane spans lie at 176-196 (HPTF…VIWA), 202-224 (LGHG…WIEY), and 238-258 (LNNW…VLSA). The tract at residues 269–343 (EPGAETAAGD…TNGADSAKKG (75 aa)) is disordered. The span at 283–293 (ADKDVKGTKDA) shows a compositional bias: basic and acidic residues. The segment covering 314–324 (APEDTSGADEA) has biased composition (acidic residues).

The protein belongs to the Lgt family.

The protein resides in the cell membrane. The enzyme catalyses L-cysteinyl-[prolipoprotein] + a 1,2-diacyl-sn-glycero-3-phospho-(1'-sn-glycerol) = an S-1,2-diacyl-sn-glyceryl-L-cysteinyl-[prolipoprotein] + sn-glycerol 1-phosphate + H(+). It functions in the pathway protein modification; lipoprotein biosynthesis (diacylglyceryl transfer). Catalyzes the transfer of the diacylglyceryl group from phosphatidylglycerol to the sulfhydryl group of the N-terminal cysteine of a prolipoprotein, the first step in the formation of mature lipoproteins. This is Phosphatidylglycerol--prolipoprotein diacylglyceryl transferase 1 from Streptomyces coelicolor (strain ATCC BAA-471 / A3(2) / M145).